The sequence spans 247 residues: Protein ABHD14A (247 aa).

A helical; Signal-anchor for type II membrane protein transmembrane segment spans residues 11–31; that stretch reads AALLGLGLLLVFLLYMGLPGP. N-linked (GlcNAc...) asparagine glycosylation occurs at N43. Active-site charge relay system residues include S147, D198, and H225.

This sequence belongs to the AB hydrolase superfamily. ABHD14 family. As to expression, widely expressed. Higher expression is detected in brain, kidney, heart, testis, ovary and uterus.

It is found in the cytoplasm. It localises to the membrane. Functionally, possible role in granule neuron development. The polypeptide is Protein ABHD14A (Mus musculus (Mouse)).